Reading from the N-terminus, the 325-residue chain is Transaldolase (325 aa).

The active-site Schiff-base intermediate with substrate is the lysine 125.

It belongs to the transaldolase family. Type 2 subfamily.

The protein localises to the cytoplasm. The enzyme catalyses D-sedoheptulose 7-phosphate + D-glyceraldehyde 3-phosphate = D-erythrose 4-phosphate + beta-D-fructose 6-phosphate. Its pathway is carbohydrate degradation; pentose phosphate pathway; D-glyceraldehyde 3-phosphate and beta-D-fructose 6-phosphate from D-ribose 5-phosphate and D-xylulose 5-phosphate (non-oxidative stage): step 2/3. Transaldolase is important for the balance of metabolites in the pentose-phosphate pathway. In Campylobacter jejuni subsp. jejuni serotype O:2 (strain ATCC 700819 / NCTC 11168), this protein is Transaldolase (tal).